A 584-amino-acid chain; its full sequence is MAHERGHLQLPRADAIRSKLIDTFSLIEHLQGLSQAVPRHTLREILDPACQKKLMLGDQEQLVRFSIRARRMGHITHAQRLLSRLRVRCGGRPPLSLWAGWVLDSSIFSNFIISLIFLNTFVLMVEIELMNSTNTSLWPLKLALEVTDWFILLSFIVEILLMWLASFFLFWKNAWSVFDFVVTMLSLLPEFVVLIGVSADSVWLQLLRVSRVLRSLKLFARFPQIKVILLALVRALKSMTFLLMLLLIFFYVFAVAGVYFFKEYSRSTIENLEYNMFFSDLLNSLVTVFILFTLDHWYAVLQDVWKVPEASRVFSSIYVILWLLLGSIIFRNIIVAMMVTNFQNIRNELHEEMTHLEVQYKADIFKRRIIQRRQQSESLRGTSQGKVSEDITETSEATDEEKSEAEESEEEKSEEEKSDVEKSDEEKNDEEKSDEEENDEEKSDVEKSDEEKNDEEKGYTEKVYSGRTFVERSYAERSFAGKAENEKVQKELKEKAYPGSPPNSSSHDEAFAADDTYLENLDWETLVHENLPGLMDMDQDDRVVWPRDSLFRYFELLESLQYNLEERKRLQEFAVQALMNFEDK.

Over 1 to 106 the chain is Cytoplasmic; the sequence is MAHERGHLQL…LWAGWVLDSS (106 aa). The chain crosses the membrane as a helical span at residues 107–129; sequence IFSNFIISLIFLNTFVLMVEIEL. Residues 130 to 138 are Extracellular-facing; that stretch reads MNSTNTSLW. Residues 139–164 form a helical membrane-spanning segment; the sequence is PLKLALEVTDWFILLSFIVEILLMWL. The Cytoplasmic segment spans residues 165–173; the sequence is ASFFLFWKN. A helical membrane pass occupies residues 174 to 198; that stretch reads AWSVFDFVVTMLSLLPEFVVLIGVS. Topologically, residues 199 to 201 are extracellular; that stretch reads ADS. Residues 202-220 form a helical membrane-spanning segment; that stretch reads VWLQLLRVSRVLRSLKLFA. Residues 221-237 are Cytoplasmic-facing; that stretch reads RFPQIKVILLALVRALK. Residues 238-260 traverse the membrane as a helical segment; that stretch reads SMTFLLMLLLIFFYVFAVAGVYF. Over 261–279 the chain is Extracellular; it reads FKEYSRSTIENLEYNMFFS. The segment at residues 280 to 292 is an intramembrane region (helical; Pore-forming); that stretch reads DLLNSLVTVFILF. The Extracellular portion of the chain corresponds to 293 to 312; the sequence is TLDHWYAVLQDVWKVPEASR. A helical membrane pass occupies residues 313–339; it reads VFSSIYVILWLLLGSIIFRNIIVAMMV. At 340 to 584 the chain is on the cytoplasmic side; sequence TNFQNIRNEL…VQALMNFEDK (245 aa). Residues 376 to 386 show a composition bias toward polar residues; sequence SESLRGTSQGK. Disordered stretches follow at residues 376 to 460 and 480 to 510; these read SESL…KGYT and AGKA…HDEA. Acidic residues-rich tracts occupy residues 390-418 and 426-443; these read DITE…EEKS and EKND…EEKS. Basic and acidic residues-rich tracts occupy residues 444 to 460 and 483 to 496; these read DVEK…KGYT and AENE…KEKA.

The protein belongs to the cation channel sperm-associated (TC 1.A.1.19) family. As to quaternary structure, component of the CatSper complex or CatSpermasome composed of the core pore-forming members CATSPER1, CATSPER2, CATSPER3 and CATSPER4 as well as auxiliary members CATSPERB, CATSPERG, CATSPERD, CATSPERE, CATSPERZ, C2CD6/CATSPERT, SLCO6C1, TMEM249, TMEM262 and EFCAB9. HSPA1 may be an additional auxiliary complex member. The core complex members CATSPER1, CATSPER2, CATSPER3 and CATSPER4 form a heterotetrameric channel. The auxiliary CATSPERB, CATSPERG, CATSPERD and CATSPERE subunits form a pavilion-like structure over the pore which stabilizes the complex through interactions with CATSPER4, CATSPER3, CATSPER1 and CATSPER2 respectively. SLCO6C1 interacts with CATSPERE and TMEM262/CATSPERH interacts with CATSPERB, further stabilizing the complex. C2CD6/CATSPERT interacts at least with CATSPERD and is required for targeting the CatSper complex in the flagellar membrane. Interacts with Ca(v)3.3/CACNA1I, leading to suppression of T-type calcium channel activity.

The protein resides in the cell projection. It localises to the cilium. Its subcellular location is the flagellum membrane. The enzyme catalyses Ca(2+)(in) = Ca(2+)(out). Activated by intracellular alkalinization. Its function is as follows. Pore-forming subunit of the CatSper complex, a sperm-specific voltage-gated calcium channel that plays a central role in sperm cell hyperactivation. Controls calcium entry to mediate the hyperactivated motility, a step needed for sperm motility which is essential late in the preparation of sperm for fertilization. The sequence is that of Cation channel sperm-associated protein 2 (Catsper2) from Rattus norvegicus (Rat).